A 1187-amino-acid polypeptide reads, in one-letter code: MNHSQQVPSRDQLLAKTGVLLIVDQITPPSGPVAKGVTPTVKERELALFIAVSDDGMVYAFNGHVDLGTGIRTSLAQIVAEELDLRMDQVHMVLGDTERAPNQGATIASATLQISAVPLRKAAATARRYLLQQAALRLGCPPEMLRIEDGTVIASNGSTLSFAELVQGKNHQLHIADDAPLKAIEDYRLVGRSAPRVDIPGKATGELTYVHDMRLPNMLHGRVIRPPYAGHDSGDFVGNSLLAVDESSIAHLPGVVAVVVIRDFVGVVAEREEQAIRAAHELKVSWKPFTGKLPDLSDVAQAIRDNPRVQRTVLDQGDVDGGIANASQRLSRSYLWPYQLHASIGPSCALADFTAGQIRVWSGTQNPHLLRADLAWLLACDEARIEIIRMEAAGCYGRNCADDVCADAVLLSRAVQRPVRVQLTREQEHVWEPKGTAQLMEIDGGLNADGSVAAYDFQTSYPSNGAPTLALLLTGAVEPVPALFEMGDRTSIPPYDYEHMRVTINDMTPLVRASWMRGVSAMPNSFAHESYIDELAFAAGVDPVEYRLKHLSDPRAIDLVKATAERAQWQPHTRPMQTQAEGDVLRGRGFAYARYIHSKFPGFGAAWAAWVADVAVDRRTGEVAVTRVVIGHDAGMMVNPEGVRHQIHGNVIQSTSRVLKEQVSFEESTVASKEWGGYPILTFPELPAIDVMMLPRQHEPPMGSGESASVPSAAAIANAIFDATGIRFRELPITAERVRAALGGEGQGPDAPAPAQPSTKRSKWWFGSLAGVFGAALGMLATALPWRAEIAPVTPPGVGSWSAAMLERGRQVAAAGDCAVCHTVSGGKANAGGLAMDTPFGTLYSTNITPDPETGIGRWSFAAFERAMREGISRDGRHLYPAFPYTSFRNINDADMQALYAYLMSQTPVRQEAPANQMRFPFNQRPLMAGWNARFLQRGEYQPDPQRSAQWNRGAYLVDGLGHCTACHSPRNLMGAEKGGSSYLAGGMVDGWEAPALNALGKSSTPWSEDELFNYLSTGFSEKHGVAAGPMGPVVSELATLPKSDVRAIAHYLSSLEGEPQALAANAAPQVDTHVSLSNGERVFKGACLGCHSDGLGPKLFGVSPSMAVNSNVHSDLPDNLLRVVLHGIPTPATRDLGYMPGFKDSLSDRQVADLAAYLRHRFAADKPAWQGLASKAAQVRANPGSH.

A helical membrane pass occupies residues 764-784 (WWFGSLAGVFGAALGMLATAL). Cytochrome c domains lie at 804–907 (AMLE…MSQT), 949–1057 (AQWN…SSLE), and 1075–1163 (VSLS…RHRF). Positions 818, 821, 822, 964, 967, 968, 1088, 1091, and 1092 each coordinate heme c.

The cofactor is Mo-molybdopterin cytosine dinucleotide.

It is found in the membrane. It catalyses the reaction 2 Fe(III)-[cytochrome] + nicotinate + H2O = 2 Fe(II)-[cytochrome] + 6-hydroxynicotinate + 2 H(+). The protein operates within cofactor degradation; nicotinate degradation. Its function is as follows. Subunit of the two-component enzyme NicAB that mediates nicotinate hydroxylation, the first step in the aerobic nicotinate degradation pathway. Mediates conversion of nicotinate into 6-hydroxynicotinate (6HNA). The polypeptide is Nicotinate dehydrogenase subunit B (nicB) (Pseudomonas putida (strain ATCC 47054 / DSM 6125 / CFBP 8728 / NCIMB 11950 / KT2440)).